We begin with the raw amino-acid sequence, 144 residues long: Catabolic 3-dehydroquinase 1 (144 aa).

The active-site Proton acceptor is tyrosine 24. Residues asparagine 75, histidine 81, and aspartate 88 each contribute to the substrate site. Catalysis depends on histidine 101, which acts as the Proton donor. Residues isoleucine 102–serine 103 and arginine 112 contribute to the substrate site.

It belongs to the type-II 3-dehydroquinase family. In terms of assembly, homododecamer. Adopts a ring-like structure, composed of an arrangement of two hexameric rings stacked on top of one another.

It carries out the reaction 3-dehydroquinate = 3-dehydroshikimate + H2O. The protein operates within aromatic compound metabolism; 3,4-dihydroxybenzoate biosynthesis; 3,4-dihydroxybenzoate from 3-dehydroquinate: step 1/2. Functionally, is involved in the catabolism of quinate. Allows the utilization of quinate as carbon source via the beta-ketoadipate pathway. In Fusarium vanettenii (strain ATCC MYA-4622 / CBS 123669 / FGSC 9596 / NRRL 45880 / 77-13-4) (Fusarium solani subsp. pisi), this protein is Catabolic 3-dehydroquinase 1.